Here is a 77-residue protein sequence, read N- to C-terminus: Large ribosomal subunit protein uL24 (77 aa).

The protein belongs to the universal ribosomal protein uL24 family. As to quaternary structure, part of the 50S ribosomal subunit.

Functionally, one of two assembly initiator proteins, it binds directly to the 5'-end of the 23S rRNA, where it nucleates assembly of the 50S subunit. In terms of biological role, one of the proteins that surrounds the polypeptide exit tunnel on the outside of the subunit. The polypeptide is Large ribosomal subunit protein uL24 (Campylobacter fetus subsp. fetus (strain 82-40)).